A 95-amino-acid polypeptide reads, in one-letter code: Translation initiation factor IF-1 (95 aa).

The S1-like domain occupies 1–72 (MAKEELIEMD…TKARITYRHK (72 aa)). The tract at residues 70–95 (RHKVGGPPGPVTGGGNRPPPRQPRRR) is disordered. Residues 86–95 (RPPPRQPRRR) are compositionally biased toward pro residues.

Belongs to the IF-1 family. Component of the 30S ribosomal translation pre-initiation complex which assembles on the 30S ribosome in the order IF-2 and IF-3, IF-1 and N-formylmethionyl-tRNA(fMet); mRNA recruitment can occur at any time during PIC assembly.

The protein localises to the cytoplasm. One of the essential components for the initiation of protein synthesis. Stabilizes the binding of IF-2 and IF-3 on the 30S subunit to which N-formylmethionyl-tRNA(fMet) subsequently binds. Helps modulate mRNA selection, yielding the 30S pre-initiation complex (PIC). Upon addition of the 50S ribosomal subunit IF-1, IF-2 and IF-3 are released leaving the mature 70S translation initiation complex. This chain is Translation initiation factor IF-1, found in Rhodospirillum rubrum (strain ATCC 11170 / ATH 1.1.1 / DSM 467 / LMG 4362 / NCIMB 8255 / S1).